A 116-amino-acid chain; its full sequence is Large ribosomal subunit protein bL19 (116 aa).

Belongs to the bacterial ribosomal protein bL19 family.

This protein is located at the 30S-50S ribosomal subunit interface and may play a role in the structure and function of the aminoacyl-tRNA binding site. The sequence is that of Large ribosomal subunit protein bL19 from Actinobacillus succinogenes (strain ATCC 55618 / DSM 22257 / CCUG 43843 / 130Z).